Consider the following 50-residue polypeptide: Omega-conotoxin Bu8 (50 aa).

Alanine 1 is a signal peptide. Positions 2 to 24 (EDSRGTQLHRALRKATKLSESTR) are excised as a propeptide. 3 disulfides stabilise this stretch: cysteine 25–cysteine 40, cysteine 32–cysteine 44, and cysteine 39–cysteine 49. Cysteine amide is present on cysteine 49.

This sequence belongs to the conotoxin O1 superfamily. As to expression, expressed by the venom duct.

The protein localises to the secreted. Functionally, omega-conotoxins act at presynaptic membranes, they bind and block voltage-gated calcium channels (Cav). This toxin selectively and potently inhibits depolarization-activated rat Cav2.2/CACNA1B currents (IC(50)=89 nM), when coexpressed with alpha-2/delta-1 (CACNA2D1) and beta-3 (CACNB3) subunits. In vivo, is lethal to fish and displays potent analgesic activity in mice pain models of hot plate and acetic acid writhing but has fewer side effects on mouse motor function and lower toxicity in goldfish. Shows higher or similar analgesic activity in the pain models mentioned above compared to MVIIA, and lower side effects. In addition, it blocks Cav2.2/CACNA1B more rapidly than MVIIA and also dissociates more rapidly. The chain is Omega-conotoxin Bu8 from Conus bullatus (Bubble cone).